Consider the following 321-residue polypeptide: MIFSTLEHILTHISFSIISVVITIQLMNLLVHELVQLGDASEKGMIATFFSITGLLVTRWIYSGHFPLSDLYESLIFLSWSFSIIHMVPYFRNHRNHFSAITAPSAIFTQGFATSGLLTEMHQSIILVPALQSQWLMMHVSMMLLSYAALLCGSLLSVALLVITFRKNSDIFDKRNNFLIRSFFFGEIEYLNEKRSVLQNTSFDSFTNYHKYQLTQRLDFWSYRVISLGFIFLTIGILSGAVWANEAWGSYWNWDPKEIWAFITWAIFAIYLHTRTNHSLQGANSAIVASIGFLIIWICYFGVNLLGIGLHSYGSFTLISN.

The next 8 helical transmembrane spans lie at 9-29, 44-64, 71-91, 98-118, 143-163, 225-245, 252-272, and 286-306; these read ILTHISFSIISVVITIQLMNL, GMIATFFSITGLLVTRWIYSG, LYESLIFLSWSFSIIHMVPYF, FSAITAPSAIFTQGFATSGLL, MLLSYAALLCGSLLSVALLVI, VISLGFIFLTIGILSGAVWAN, WNWDPKEIWAFITWAIFAIYL, and AIVASIGFLIIWICYFGVNLL.

The protein belongs to the CcmF/CycK/Ccl1/NrfE/CcsA family. In terms of assembly, may interact with Ccs1.

The protein resides in the plastid. Its subcellular location is the chloroplast thylakoid membrane. Its function is as follows. Required during biogenesis of c-type cytochromes (cytochrome c6 and cytochrome f) at the step of heme attachment. The protein is Cytochrome c biogenesis protein CcsA of Acorus calamus var. americanus (American sweet flag).